The sequence spans 300 residues: tRNA pseudouridine synthase B (300 aa).

D38 functions as the Nucleophile in the catalytic mechanism.

The protein belongs to the pseudouridine synthase TruB family. Type 1 subfamily.

It carries out the reaction uridine(55) in tRNA = pseudouridine(55) in tRNA. In terms of biological role, responsible for synthesis of pseudouridine from uracil-55 in the psi GC loop of transfer RNAs. The sequence is that of tRNA pseudouridine synthase B from Anaplasma phagocytophilum (strain HZ).